The primary structure comprises 313 residues: Extracellular metalloprotease (313 aa).

The signal sequence occupies residues 1–34; that stretch reads MKLVPRFRKQWFAYLTVLCLALAAAVSFGVPAKA. Positions 35–74 are disordered; that stretch reads AENPQTSVSNTGKEADATKNQTSKADQVSAPYEGTGKTSK. The propeptide occupies 35-93; the sequence is AENPQTSVSNTGKEADATKNQTSKADQVSAPYEGTGKTSKSLYGGQTELEKNIQTLQPS. Residues 37–60 show a composition bias toward polar residues; it reads NPQTSVSNTGKEADATKNQTSKAD. A disulfide bridge links cysteine 131 with cysteine 147. Catalysis depends on charge relay system residues histidine 146 and serine 267.

It belongs to the peptidase S1B family. Monomer.

It is found in the secreted. The protein is Extracellular metalloprotease (mpr) of Bacillus subtilis (strain 168).